The sequence spans 495 residues: L-arabinose isomerase (495 aa).

Mn(2+)-binding residues include E305, E332, H349, and H448.

It belongs to the arabinose isomerase family. Mn(2+) is required as a cofactor.

It carries out the reaction beta-L-arabinopyranose = L-ribulose. It functions in the pathway carbohydrate degradation; L-arabinose degradation via L-ribulose; D-xylulose 5-phosphate from L-arabinose (bacterial route): step 1/3. In terms of biological role, catalyzes the conversion of L-arabinose to L-ribulose. This chain is L-arabinose isomerase, found in Mannheimia succiniciproducens (strain KCTC 0769BP / MBEL55E).